The chain runs to 388 residues: MKFVDEANIRVEAGDGGSGCVSFRREKYVPDGGPDGGDGGDGGSVYLQANENLNTLIDYRFTRFHMAERGTNGRGRDCTGHGGSDLVLQVPVGTRAIDQETEESLGDLTVNGQKLLVAKGGFHGLGNTRFKSSTNRAPRQKTLGTPGEVRSIKLELLLLADVGLLGMPNAGKSTFIRSVSRATPKVADYPFTTLVPNLGVVNPRPGQSFVIADIPGLIEGAAEGAGLGIRFLKHLERCRMLLHIIDIEPIDGVDPVYSARAIVGELEKYSPKLAAKPRWLVFNKTDLLLDEEIQAKIDRIVKELDWQGDVYTMSAYNRTGTEELSIKMLDYIRSLPAIVEEITADADVEFKWDNYHSAEDENANENYDDDFDEDFDDDDYDVEVIYQR.

In terms of domain architecture, Obg spans 1 to 159 (MKFVDEANIR…RSIKLELLLL (159 aa)). One can recognise an OBG-type G domain in the interval 160-333 (ADVGLLGMPN…LSIKMLDYIR (174 aa)). GTP-binding positions include 166 to 173 (GMPNAGKS), 191 to 195 (FTTLV), 213 to 216 (DIPG), 283 to 286 (NKTD), and 314 to 316 (SAY). Positions 173 and 193 each coordinate Mg(2+).

The protein belongs to the TRAFAC class OBG-HflX-like GTPase superfamily. OBG GTPase family. In terms of assembly, monomer. Mg(2+) is required as a cofactor.

Its subcellular location is the cytoplasm. Functionally, an essential GTPase which binds GTP, GDP and possibly (p)ppGpp with moderate affinity, with high nucleotide exchange rates and a fairly low GTP hydrolysis rate. Plays a role in control of the cell cycle, stress response, ribosome biogenesis and in those bacteria that undergo differentiation, in morphogenesis control. In Shewanella frigidimarina (strain NCIMB 400), this protein is GTPase Obg.